The following is a 392-amino-acid chain: Alanine--glyoxylate aminotransferase (392 aa).

Thr9 is subject to Phosphothreonine. Residue Lys209 is modified to N6-(pyridoxal phosphate)lysine. At Lys225 the chain carries N6-acetyllysine; alternate. Lys225 bears the N6-succinyllysine; alternate mark. N6-acetyllysine occurs at positions 234 and 312. Arg360 provides a ligand contact to substrate.

This sequence belongs to the class-V pyridoxal-phosphate-dependent aminotransferase family. As to quaternary structure, homodimer. It depends on pyridoxal 5'-phosphate as a cofactor. As to expression, liver.

The protein resides in the peroxisome. It carries out the reaction L-serine + pyruvate = 3-hydroxypyruvate + L-alanine. The catalysed reaction is glyoxylate + L-alanine = glycine + pyruvate. Its activity is regulated as follows. Alanine--glyoxylate aminotransferase activity is inhibited by 1 mM (aminooxy)acetic acid by 97.5%. Its function is as follows. Peroxisomal aminotransferase that catalyzes the transamination of glyoxylate to glycine and contributes to the glyoxylate detoxification. Also catalyzes the transamination between L-serine and pyruvate and contributes to gluconeogenesis from the L-serine metabolism. In Homo sapiens (Human), this protein is Alanine--glyoxylate aminotransferase.